Here is a 166-residue protein sequence, read N- to C-terminus: Plastocyanin, chloroplastic (166 aa).

A chloroplast-targeting transit peptide spans 1 to 67 (MASLTSAAVT…GAVLASNALA (67 aa)). The Plastocyanin-like domain occupies 68–166 (VEVLLGGSDG…AGMAGKITVN (99 aa)). Cu cation-binding residues include histidine 104, cysteine 151, histidine 154, and methionine 159.

Belongs to the plastocyanin family. Requires Cu(2+) as cofactor.

The protein resides in the plastid. Its subcellular location is the chloroplast thylakoid membrane. Functionally, participates in electron transfer between P700 and the cytochrome b6-f complex in photosystem I. The protein is Plastocyanin, chloroplastic (PETE) of Fritillaria agrestis (Stinkbells).